We begin with the raw amino-acid sequence, 672 residues long: Methionine--tRNA ligase (672 aa).

The short motif at 12 to 22 (AYTNGPLHLGH) is the 'HIGH' region element. Residues cysteine 144, cysteine 147, cysteine 156, and cysteine 159 each coordinate Zn(2+). The 'KMSKS' region signature appears at 330 to 334 (KMSTS). An ATP-binding site is contributed by threonine 333. The 100-residue stretch at 573–672 (DFAKIELKVA…KDLPVGSTIC (100 aa)) folds into the tRNA-binding domain.

Belongs to the class-I aminoacyl-tRNA synthetase family. MetG type 1 subfamily. In terms of assembly, homodimer. Zn(2+) is required as a cofactor.

Its subcellular location is the cytoplasm. The catalysed reaction is tRNA(Met) + L-methionine + ATP = L-methionyl-tRNA(Met) + AMP + diphosphate. In terms of biological role, is required not only for elongation of protein synthesis but also for the initiation of all mRNA translation through initiator tRNA(fMet) aminoacylation. This chain is Methionine--tRNA ligase, found in Methanococcus aeolicus (strain ATCC BAA-1280 / DSM 17508 / OCM 812 / Nankai-3).